Consider the following 589-residue polypeptide: Kelch-like protein 25 (589 aa).

The 69-residue stretch at 46-114 (TDVTLWAGDR…AYSSRIAINE (69 aa)) folds into the BTB domain. In terms of domain architecture, BACK spans 149 to 250 (CLGMMLLSDA…LPSDCLQEAV (102 aa)). Kelch repeat units follow at residues 296 to 340 (TLLI…AIGC), 341 to 388 (KVYV…ELEN), 389 to 444 (CLYV…SAKL), 446 to 492 (LFVF…VLGS), 494 to 538 (IFIM…ASGN), and 539 to 585 (KLYV…STWK).

In terms of assembly, component of the BCR(KLHL25) E3 ubiquitin ligase complex, at least composed of CUL3, KLHL25 and RBX1.

Its pathway is protein modification; protein ubiquitination. Functionally, substrate-specific adapter of a BCR (BTB-CUL3-RBX1) E3 ubiquitin ligase complex involved in various processes, such as translation homeostasis and lipid synthesis. The BCR(KLHL25) ubiquitin ligase complex acts by mediating ubiquitination of hypophosphorylated EIF4EBP1 (4E-BP1): ubiquitination and subsequent degradation of hypophosphorylated EIF4EBP1 (4E-BP1) probably serves as a homeostatic mechanism to maintain translation and prevent eIF4E inhibition when eIF4E levels are low. The BCR(KLHL25) complex does not target EIF4EBP1 (4E-BP1) when it is hyperphosphorylated or associated with eIF4E. The BCR(KLHL25) complex also acts as a regulator of lipid synthesis by mediating ubiquitination and degradation of ACLY, thereby inhibiting lipid synthesis. BCR(KLHL25)-mediated degradation of ACLY promotes fatty acid oxidation and is required for differentiation of inducible regulatory T (iTreg) cells. The sequence is that of Kelch-like protein 25 from Homo sapiens (Human).